Consider the following 347-residue polypeptide: Ataxin-7-like protein 3 (347 aa).

The SGF11-type zinc-finger motif lies at 84–105 (CVCPNCSRSIAASRFAPHLEKC). Over residues 116–125 (ANRRIANSNN) the composition is skewed to low complexity. The interval 116–184 (ANRRIANSNN…GELSNSDPFK (69 aa)) is disordered. 2 positions are modified to phosphoserine: Ser-129 and Ser-131. Acidic residues predominate over residues 132–141 (DQEDNDDIND). The SCA7 domain maps to 196-263 (LGPEELRSLL…SLDNDSFDMT (68 aa)). A compositionally biased stretch (low complexity) spans 275-288 (DGSSDLSPSDSGSS). The tract at residues 275–347 (DGSSDLSPSD…PTPSIYDDIN (73 aa)) is disordered. Phosphoserine is present on residues Ser-278, Ser-281, and Ser-326.

Belongs to the SGF11 family. In terms of assembly, component of some SAGA transcription coactivator-HAT complexes, at least composed of ATXN7, ATXN7L3, ENY2, GCN5L2, SUPT3H, TAF10, TRRAP and USP22. Within the SAGA complex, ENY2, ATXN7, ATXN7L3, and USP22 form an additional subcomplex of SAGA called the DUB module (deubiquitination module). Interacts directly with ENY2 and USP22.

The protein localises to the nucleus. Functionally, component of the transcription regulatory histone acetylation (HAT) complex SAGA, a multiprotein complex that activates transcription by remodeling chromatin and mediating histone acetylation and deubiquitination. Within the SAGA complex, participates in a subcomplex that specifically deubiquitinates both histones H2A and H2B. The SAGA complex is recruited to specific gene promoters by activators such as MYC, where it is required for transcription. Required for nuclear receptor-mediated transactivation. Within the complex, it is required to recruit USP22 and ENY2 into the SAGA complex. Regulates H2B monoubiquitination (H2Bub1) levels. Affects subcellular distribution of ENY2, USP22 and ATXN7L3B. In Homo sapiens (Human), this protein is Ataxin-7-like protein 3.